The sequence spans 390 residues: Centrosomal protein of 44 kDa (390 aa).

Residues 11–195 (RNLEQVLRLL…ISEDTLSPIT (185 aa)) are binds with microtubules and centrioles. Positions 233-267 (EITALQTMLAECQEKLKELTLIEKRLDCLEQKMKG) form a coiled coil. The tract at residues 323-347 (KNKVGRPASIPLSSRYSTASSDSTP) is disordered. Phosphoserine occurs at positions 331 and 345. The segment covering 335–345 (SSRYSTASSDS) has biased composition (low complexity). Phosphothreonine is present on Thr346. Residues 361–385 (SEETTIQKMERMKKMFEETAELLKC) are a coiled coil.

As to quaternary structure, interacts with CROCC. Interacts with POC1B; the interaction is direct and recruits POC1B to centriolar microtubules. Binds to centriolar microtubules.

The protein resides in the cytoplasm. The protein localises to the cytoskeleton. It localises to the microtubule organizing center. It is found in the centrosome. Its subcellular location is the centriole. The protein resides in the spindle pole. The protein localises to the midbody. Functionally, centriole-enriched microtubule-binding protein involved in centriole biogenesis. In collaboration with CEP295 and POC1B, is required for the centriole-to-centrosome conversion by ensuring the formation of bona fide centriole wall. Functions as a linker component that maintains centrosome cohesion. Associates with CROCC and regulates its stability and localization to the centrosome. In Macaca fascicularis (Crab-eating macaque), this protein is Centrosomal protein of 44 kDa (CEP44).